Reading from the N-terminus, the 421-residue chain is 4-hydroxy-3-methylbut-2-en-1-yl diphosphate synthase (flavodoxin) (421 aa).

4 residues coordinate [4Fe-4S] cluster: Cys311, Cys314, Cys357, and Glu364.

It belongs to the IspG family. It depends on [4Fe-4S] cluster as a cofactor.

It carries out the reaction (2E)-4-hydroxy-3-methylbut-2-enyl diphosphate + oxidized [flavodoxin] + H2O + 2 H(+) = 2-C-methyl-D-erythritol 2,4-cyclic diphosphate + reduced [flavodoxin]. Its pathway is isoprenoid biosynthesis; isopentenyl diphosphate biosynthesis via DXP pathway; isopentenyl diphosphate from 1-deoxy-D-xylulose 5-phosphate: step 5/6. Its function is as follows. Converts 2C-methyl-D-erythritol 2,4-cyclodiphosphate (ME-2,4cPP) into 1-hydroxy-2-methyl-2-(E)-butenyl 4-diphosphate. The chain is 4-hydroxy-3-methylbut-2-en-1-yl diphosphate synthase (flavodoxin) from Xanthomonas euvesicatoria pv. vesicatoria (strain 85-10) (Xanthomonas campestris pv. vesicatoria).